We begin with the raw amino-acid sequence, 246 residues long: DNA repair protein RecO (246 aa).

Belongs to the RecO family.

In terms of biological role, involved in DNA repair and RecF pathway recombination. This chain is DNA repair protein RecO, found in Methylorubrum extorquens (strain CM4 / NCIMB 13688) (Methylobacterium extorquens).